Here is a 342-residue protein sequence, read N- to C-terminus: S-adenosylmethionine:tRNA ribosyltransferase-isomerase (342 aa).

Belongs to the QueA family. As to quaternary structure, monomer.

The protein resides in the cytoplasm. The catalysed reaction is 7-aminomethyl-7-carbaguanosine(34) in tRNA + S-adenosyl-L-methionine = epoxyqueuosine(34) in tRNA + adenine + L-methionine + 2 H(+). It participates in tRNA modification; tRNA-queuosine biosynthesis. In terms of biological role, transfers and isomerizes the ribose moiety from AdoMet to the 7-aminomethyl group of 7-deazaguanine (preQ1-tRNA) to give epoxyqueuosine (oQ-tRNA). The sequence is that of S-adenosylmethionine:tRNA ribosyltransferase-isomerase from Streptococcus pyogenes serotype M1.